We begin with the raw amino-acid sequence, 93 residues long: Small ribosomal subunit protein uS19 (93 aa).

It belongs to the universal ribosomal protein uS19 family.

Its function is as follows. Protein S19 forms a complex with S13 that binds strongly to the 16S ribosomal RNA. This chain is Small ribosomal subunit protein uS19, found in Oleidesulfovibrio alaskensis (strain ATCC BAA-1058 / DSM 17464 / G20) (Desulfovibrio alaskensis).